A 537-amino-acid polypeptide reads, in one-letter code: Extracellular exo-inulinase (537 aa).

Residues 1–19 form the signal peptide; it reads MAPLSKALSVFMLMGITYA. Beta-D-fructose-binding residues include N40 and D41. Catalysis depends on D41, which acts as the Nucleophile. N-linked (GlcNAc...) asparagine glycosylation occurs at N49. Beta-D-fructose-binding residues include Q57 and W65. N-linked (GlcNAc...) asparagine glycosylation occurs at N67. S103 provides a ligand contact to beta-D-fructose. N-linked (GlcNAc...) asparagine glycosylation is found at N111 and N112. Positions 188, 189, and 241 each coordinate beta-D-fructose. The Proton donor/acceptor role is filled by E241. 2 N-linked (GlcNAc...) asparagine glycosylation sites follow: N254 and N300. W335 lines the beta-D-fructose pocket. N-linked (GlcNAc...) asparagine glycosylation is found at N398 and N430.

This sequence belongs to the glycosyl hydrolase 32 family.

It localises to the secreted. It carries out the reaction Hydrolysis of terminal, non-reducing (2-&gt;1)- and (2-&gt;6)-linked beta-D-fructofuranose residues in fructans.. In terms of biological role, exo-inulinase involved in utilization of the plant storage polymer inulin, consisting of fructooligosaccharides with a degree of polymerization (DP) value from 2 to 60. Splits off terminal fructose units successively from the non-reducing end of the inulin molecule, and also hydrolyzes levan, stachyose and raffinose. Hydrolyzes both beta-2,1- as well as beta-2,6-fructosyl linkages in fructooligosaccharides. In Aspergillus awamori (Black koji mold), this protein is Extracellular exo-inulinase.